The primary structure comprises 157 residues: Small ribosomal subunit protein uS7 (157 aa).

Belongs to the universal ribosomal protein uS7 family. As to quaternary structure, part of the 30S ribosomal subunit. Contacts proteins S9 and S11.

One of the primary rRNA binding proteins, it binds directly to 16S rRNA where it nucleates assembly of the head domain of the 30S subunit. Is located at the subunit interface close to the decoding center, probably blocks exit of the E-site tRNA. The polypeptide is Small ribosomal subunit protein uS7 (Delftia acidovorans (strain DSM 14801 / SPH-1)).